A 441-amino-acid polypeptide reads, in one-letter code: tRNA pseudouridine synthase Pus10 (441 aa).

Aspartate 268 functions as the Nucleophile in the catalytic mechanism. Residues tyrosine 333 and tyrosine 405 each coordinate substrate.

The protein belongs to the pseudouridine synthase Pus10 family.

The enzyme catalyses uridine(54) in tRNA = pseudouridine(54) in tRNA. The catalysed reaction is uridine(55) in tRNA = pseudouridine(55) in tRNA. Its function is as follows. Responsible for synthesis of pseudouridine from uracil-54 and uracil-55 in the psi GC loop of transfer RNAs. This Thermosphaera aggregans (strain DSM 11486 / M11TL) protein is tRNA pseudouridine synthase Pus10.